Consider the following 226-residue polypeptide: Ribonuclease 3 (226 aa).

The 123-residue stretch at 6–128 (INRLQRKLGY…LIGGVFLDSN (123 aa)) folds into the RNase III domain. Residue Glu41 coordinates Mg(2+). Asp45 is a catalytic residue. Mg(2+)-binding residues include Asp114 and Glu117. Residue Glu117 is part of the active site. One can recognise a DRBM domain in the interval 155 to 225 (DPKTRLQEYL…AEQALKKLEL (71 aa)).

It belongs to the ribonuclease III family. Homodimer. It depends on Mg(2+) as a cofactor.

It localises to the cytoplasm. The enzyme catalyses Endonucleolytic cleavage to 5'-phosphomonoester.. Digests double-stranded RNA. Involved in the processing of primary rRNA transcript to yield the immediate precursors to the large and small rRNAs (23S and 16S). Processes some mRNAs, and tRNAs when they are encoded in the rRNA operon. Processes pre-crRNA and tracrRNA of type II CRISPR loci if present in the organism. The protein is Ribonuclease 3 of Salmonella enteritidis PT4 (strain P125109).